Here is a 146-residue protein sequence, read N- to C-terminus: Small ribosomal subunit protein bS6 (146 aa).

The disordered stretch occupies residues 94-146 (GPITTPSPMMQEGKSRPPHSSDEDSENTAPAKAKTADSPGEDTRTTEESDPKP). Composition is skewed to basic and acidic residues over residues 106–115 (GKSRPPHSSD) and 134–146 (EDTR…DPKP).

The protein belongs to the bacterial ribosomal protein bS6 family.

Its function is as follows. Binds together with bS18 to 16S ribosomal RNA. This Nitrosomonas europaea (strain ATCC 19718 / CIP 103999 / KCTC 2705 / NBRC 14298) protein is Small ribosomal subunit protein bS6.